Here is a 1142-residue protein sequence, read N- to C-terminus: Error-prone DNA polymerase (1142 aa).

The disordered stretch occupies residues 291–361 (TSSPAQAARE…GTGAAAGTDR (71 aa)). Composition is skewed to low complexity over residues 311-320 (LRASLPAERP) and 327-344 (GPAA…PGEP). Over residues 345 to 355 (GLAGAGGGTGA) the composition is skewed to gly residues.

It belongs to the DNA polymerase type-C family. DnaE2 subfamily.

It localises to the cytoplasm. It catalyses the reaction DNA(n) + a 2'-deoxyribonucleoside 5'-triphosphate = DNA(n+1) + diphosphate. Its function is as follows. DNA polymerase involved in damage-induced mutagenesis and translesion synthesis (TLS). It is not the major replicative DNA polymerase. In Anaeromyxobacter dehalogenans (strain 2CP-1 / ATCC BAA-258), this protein is Error-prone DNA polymerase.